Consider the following 362-residue polypeptide: Putative F-box/kelch-repeat protein At3g20710 (362 aa).

An F-box domain is found at 1-50 (MMMSNLPKDLVEEILSRVPFKYLRAIRSTCKNWYDLSKNRSFANKNIDKA). Kelch repeat units lie at residues 150 to 201 (YDKS…VSLN) and 293 to 341 (IYCR…YFKS).

This chain is Putative F-box/kelch-repeat protein At3g20710, found in Arabidopsis thaliana (Mouse-ear cress).